The chain runs to 85 residues: Protein MC005 (85 aa).

As to quaternary structure, interacts with host IKBKG; this interaction prevents NF-kappa-B activation.

The protein resides in the host cytoplasm. Functionally, plays a role in the inhibition of the host NF-kappa-B pathway by preventing ubiquitin binding-dependent regulation of host IKBKB activation by IKBKG/NEMO. This Molluscum contagiosum virus subtype 1 (MOCV) protein is Protein MC005 (MC005L).